A 238-amino-acid chain; its full sequence is Flagellar L-ring protein (238 aa).

Positions 1–16 (MNKAILAVAMVLLLAG) are cleaved as a signal peptide. Cys-17 is lipidated: N-palmitoyl cysteine. Cys-17 carries S-diacylglycerol cysteine lipidation.

Belongs to the FlgH family. The basal body constitutes a major portion of the flagellar organelle and consists of four rings (L,P,S, and M) mounted on a central rod.

It localises to the cell outer membrane. The protein resides in the bacterial flagellum basal body. In terms of biological role, assembles around the rod to form the L-ring and probably protects the motor/basal body from shearing forces during rotation. The chain is Flagellar L-ring protein from Brucella melitensis biotype 2 (strain ATCC 23457).